A 640-amino-acid polypeptide reads, in one-letter code: Paramyosin, short form (640 aa).

2 nonhelical region regions span residues 1 to 122 (MALA…PDTV) and 420 to 640 (KLEQ…TITE). Residues 123–619 (VERSRQRRRR…IIRAKHRTFV (497 aa)) adopt a coiled-coil conformation.

Belongs to the paramyosin family. Phosphorylated. In terms of tissue distribution, found in all adult muscle tissues except in indirect flight muscles and a set of temporary abdominal muscles. Not detected in larval muscle.

The protein localises to the cytoplasm. It is found in the myofibril. Functionally, paramyosin is a major structural component of many thick filaments isolated from invertebrate muscles. This is Paramyosin, short form (Prm) from Drosophila melanogaster (Fruit fly).